The sequence spans 505 residues: Protein disulfide-isomerase A3 (505 aa).

Residues 1–24 (MRFSCLALLPGVALLLASALLASA) form the signal peptide. One can recognise a Thioredoxin 1 domain in the interval 25–133 (SDVLELTDEN…IVSHLKKQAG (109 aa)). Catalysis depends on nucleophile residues cysteine 57 and cysteine 60. Cysteine 57 and cysteine 60 form a disulfide bridge. Position 61 is an N6-methyllysine (lysine 61). A disulfide bond links cysteine 85 and cysteine 92. Position 129 is an N6-succinyllysine (lysine 129). An N6-acetyllysine modification is found at lysine 152. Lysine 218 is modified (N6-succinyllysine). At lysine 252 the chain carries N6-acetyllysine. The residue at position 319 (threonine 319) is a Phosphothreonine. The Thioredoxin 2 domain maps to 343–485 (SRDGKALERF…FISYLQREAT (143 aa)). Position 362 is an N6-acetyllysine (lysine 362). Residues cysteine 406 and cysteine 409 each act as nucleophile in the active site. Cysteine 406 and cysteine 409 are joined by a disulfide. The tract at residues 484-505 (ATNPPIIQEEKPKKKKKAQEDL) is disordered. Basic and acidic residues predominate over residues 491-505 (QEEKPKKKKKAQEDL). Lysine 494 carries the post-translational modification N6-acetyllysine. The Prevents secretion from ER motif lies at 502 to 505 (QEDL).

This sequence belongs to the protein disulfide isomerase family. In terms of assembly, part of the major histocompatibility complex class I (MHC I) peptide loading complex composed of TAP1, TAP2, B2M, MHC heavy chain, TAPBP, PDIA3, and CALR. Interacts with ERP27 and CANX. Interacts with SERPINA2 and with SERPINA1. Interacts with ATP2A2. Post-translationally, within the major histocompatibility complex class I (MHC I) peptide loading complex forms reversible disulfide-linked heterodimers with TAPBP as part of its protein folding chaperone activity. This is essential to assist the dynamic assembly of the MHC I complex with high affinity antigens in the endoplasmic reticulum. In terms of processing, phosphorylated. As to expression, in caput epididymal spermatozoa, detected in the head, mid and principal pieces. In cauda epididymal spermatozoa detected only in the acrosome (at protein level).

Its subcellular location is the endoplasmic reticulum. The protein resides in the endoplasmic reticulum lumen. It is found in the melanosome. The catalysed reaction is Catalyzes the rearrangement of -S-S- bonds in proteins.. Its activity is regulated as follows. Seems to be inhibited by acidic phospholipids. Its function is as follows. Protein disulfide isomerase that catalyzes the formation, isomerization, and reduction or oxidation of disulfide bonds in client proteins and functions as a protein folding chaperone. Core component of the major histocompatibility complex class I (MHC I) peptide loading complex where it functions as an essential folding chaperone for TAPBP. Through TAPBP, assists the dynamic assembly of the MHC I complex with high affinity antigens in the endoplasmic reticulum. Therefore, plays a crucial role in the presentation of antigens to cytotoxic T cells in adaptive immunity. The sequence is that of Protein disulfide-isomerase A3 (Pdia3) from Rattus norvegicus (Rat).